A 269-amino-acid chain; its full sequence is Serine/arginine-rich splicing factor 5 (269 aa).

The 71-residue stretch at 4-74 (CRVFIGRLNP…ERVTIEHARA (71 aa)) folds into the RRM 1 domain. The segment at 73 to 105 (RARSRGGRGRGRYSDRFSSRRPRNDRRNAPPVR) is disordered. Residues 74 to 83 (ARSRGGRGRG) show a composition bias toward basic residues. Serine 86 bears the Phosphoserine mark. The 82-residue stretch at 108–189 (NRLIVENLSS…SKRHRSRSRS (82 aa)) folds into the RRM 2 domain. At lysine 167 the chain carries N6-acetyllysine. The disordered stretch occupies residues 174–269 (IKLIEGSKRH…SRSRSVDSGN (96 aa)). Over residues 181 to 226 (KRHRSRSRSRSRTRSSSRSRSRSRSRRSKSYSRSRSRSRSRSKSRS) the composition is skewed to basic residues. A phosphoserine mark is found at serine 224, serine 226, serine 230, serine 247, and serine 250. Over residues 239–251 (RGSSSRSKSPASV) the composition is skewed to low complexity.

It belongs to the splicing factor SR family. In terms of assembly, found in a pre-mRNA splicing complex with SRSF4/SFRS4, SRSF5/SFRS5, SNRNP70, SNRPA1, SRRM1 and SRRM2. Interacts with RBMY; the interaction inhibits SRSF5 pre-mRNA splicing. Interacts (via RS domain) with PHF5A (via N-terminus). Extensively phosphorylated on serine residues in the RS domain.

It localises to the nucleus. Its function is as follows. May be required for progression through G1 and entry into S phase of cell growth. May play a regulatory role in pre-mRNA splicing. Autoregulates its own expression. Plays a role in constitutive splicing and can modulate the selection of alternative splice sites. This Mus musculus (Mouse) protein is Serine/arginine-rich splicing factor 5 (Srsf5).